Consider the following 5101-residue polypeptide: Malformin synthetase mlfA (5101 aa).

The adenylation 1 stretch occupies residues 225 to 616 (ERHAANRPHS…CGRADTQVKL (392 aa)). A Carrier 1 domain is found at 757-830 (SRLEQKIQLA…EAASLAEVQE (74 aa)). Ser791 bears the O-(pantetheine 4'-phosphoryl)serine mark. Residues 868 to 1299 (EDVFPCTTMQ…ALNTLSLLQA (432 aa)) are condensation 1. The adenylation 2 stretch occupies residues 1327–1716 (DRWVTRQPEG…GRKDTQVKLR (390 aa)). The Carrier 2 domain occupies 1854–1931 (TPTLELERTL…QLAAEVGEPA (78 aa)). Ser1891 bears the O-(pantetheine 4'-phosphoryl)serine mark. Disordered regions lie at residues 1932–1961 (GQSA…DGVD) and 1994–2020 (GGSS…KKNA). Low complexity-rich tracts occupy residues 1934–1958 (SASS…STND) and 1996–2013 (SSSN…SSSS). The segment at 2066–2481 (EDIYPATALQ…AVSCSDKETL (416 aa)) is condensation 2. The tract at residues 2504 to 2896 (RRTPHAPAVC…IGRRDGQLKL (393 aa)) is adenylation 3. In terms of domain architecture, Carrier 3 spans 3032–3108 (RPVTSQEHEM…QLICHLNTIR (77 aa)). Ser3069 is subject to O-(pantetheine 4'-phosphoryl)serine. Condensation stretches follow at residues 3125–3590 (WVAL…TYDQ) and 3611–4030 (NIYP…EHLV). The segment at 4055–4445 (HNSRQAVCAW…VGRKDNQIKF (391 aa)) is adenylation 4. Residues 4579–4655 (MPSTAAERKM…DLSDQAKSLI (77 aa)) enclose the Carrier 4 domain. An O-(pantetheine 4'-phosphoryl)serine modification is found at Ser4616. A condensation 5 region spans residues 4712 to 5097 (IVVDIPGPID…KIVGLLRHPE (386 aa)).

The protein belongs to the NRP synthetase family.

It functions in the pathway secondary metabolite biosynthesis. Its function is as follows. Nonribosomal peptide synthetase; part of the gene cluster that mediates the biosynthesis of malformins, cyclic pentapeptides with a disulfide bond between 2 consecutive cysteins, that show potential anti-tumor as well as antimalarial and antitrypanosomal properties. The nonribosomal peptide synthetase mlfA is responsible of the formation of the cyclic pentapeptide. The malformin biosynthesis clusters in malformin-producing fungi also contain enzymes involved in the formation of the disulfide bond between the two consecutive cysteins within malformins, in addition to additional tailoring enzymes such as methyltransferases or oxidoreductases. They are also composed of up to 4 major facilitator superfamily transporters, and transcription factors probably involved in the regulation of the expression of those clusters. This chain is Malformin synthetase mlfA, found in Aspergillus kawachii (strain NBRC 4308) (White koji mold).